The sequence spans 475 residues: Cytosolic non-specific dipeptidase (475 aa).

N-acetylalanine is present on A2. K9 carries the post-translational modification N6-acetyllysine. Position 58 is a phosphoserine (S58). H99 contacts Mn(2+). Residue D101 is part of the active site. A Mn(2+)-binding site is contributed by D132. The active-site Proton acceptor is E166. Residues E166–E167, D195, and H228 each bind substrate. Residues E167 and D195 each contribute to the Mn(2+) site. S299 carries the phosphoserine modification. Substrate is bound by residues T330, R343, S417, and H445. H445 provides a ligand contact to Mn(2+).

Belongs to the peptidase M20A family. As to quaternary structure, homodimer. The cofactor is Mn(2+). Ubiquitously expressed with higher levels in kidney and liver (at protein level). Expressed in peripheral blood leukocytes. Expressed in gastric mucosa and down-regulated in gastric cancer mucosal tissues (at protein level). As to expression, broadly expressed in fetal tissues. Expressed in adult liver and placenta.

The protein resides in the cytoplasm. The enzyme catalyses Hydrolysis of dipeptides, preferentially hydrophobic dipeptides including prolyl amino acids.. The catalysed reaction is L-threonyl-L-threonine + H2O = 2 L-threonine. It catalyses the reaction L-threonyl-L-serine + H2O = L-threonine + L-serine. It carries out the reaction L-seryl-L-threonine + H2O = L-threonine + L-serine. The enzyme catalyses L-cysteinylglycine + H2O = L-cysteine + glycine. The catalysed reaction is L-alanyl-L-cysteine + H2O = L-cysteine + L-alanine. It catalyses the reaction (S)-lactate + L-phenylalanine = N-[(S)-lactoyl]-L-phenylalanine + H2O. With respect to regulation, inhibited by p-hydroxymercurybenzoate. The inhibitory concentration 50% (IC(50)) is 13 uM. Inhibited by bestatin. The inhibitory concentration 50% (IC(50)) is 7 nM at pH 9.5. Functionally, catalyzes the peptide bond hydrolysis in dipeptides, displaying a non-redundant activity toward threonyl dipeptides. Mediates threonyl dipeptide catabolism in a tissue-specific way. Has high dipeptidase activity toward cysteinylglycine, an intermediate metabolite in glutathione metabolism. Metabolizes N-lactoyl-amino acids, both through hydrolysis to form lactic acid and amino acids, as well as through their formation by reverse proteolysis. Plays a role in the regulation of cell cycle arrest and apoptosis. The chain is Cytosolic non-specific dipeptidase from Homo sapiens (Human).